A 91-amino-acid polypeptide reads, in one-letter code: UPF0250 protein BP0104 (91 aa).

Belongs to the UPF0250 family.

This is UPF0250 protein BP0104 from Bordetella pertussis (strain Tohama I / ATCC BAA-589 / NCTC 13251).